The sequence spans 574 residues: MNFNVWNVKEMLSIPSGSGITKPSNWNNNQTDCSLSDSQFLFGSQFCPENSETLLPSLDAGACLRHPKQTQQNSVDSEPSIFIKYQAKPQLLGGDTKDESLFSLPLPVGKSKGLSKQFEEKKRRATDQSDSETLHSFVSHFPEVINKLQTSVEKTEENLSSRSQSILDSVETIAKTFQETARVQHDLMVESVRDKGSMEQAILEIQRTCAARQAEFMEMKSTLKNLEVLVVEQTKNLQQFCDNLSQLIVPGILEELKKFTSVPQVAGHLKDSTSQTSPSLTQSLHFTRQEKHPSEEPATWQAQEAPAGNPSTSSQRPGECGVWDEGAESGVFQKAALPTDGLHRGDGHVKNKTVPTYCKNWVMTTRSVSNHFSNLPSQRAGNGQGLMAQGASQRDVSKFEARVKNACPEYGPQSMCSFDSLEQSATEQKGRPCRKRRRGKKQQPQRSKRGGLLDRKQGQTSKAACAFIARHHCPQSPVCDPQGPLICWLTPRSSTKSTCHILGGTGETSQTARAAQGNLVQHSQRSSTDSSSQGDQQINWFSDLSLENLEPPQCKKGGTNLLCDPDFDSSDDNF.

The segment at 113 to 133 (GLSKQFEEKKRRATDQSDSET) is disordered. A compositionally biased stretch (basic and acidic residues) spans 117–127 (QFEEKKRRATD). Positions 217 to 240 (MEMKSTLKNLEVLVVEQTKNLQQF) form a coiled coil. 3 disordered regions span residues 267 to 324 (GHLK…GVWD), 372 to 393 (FSNL…GASQ), and 426 to 457 (TEQK…DRKQ). Residues 272–284 (STSQTSPSLTQSL) are compositionally biased toward low complexity. Over residues 372–381 (FSNLPSQRAG) the composition is skewed to polar residues. Residues 431–449 (RPCRKRRRGKKQQPQRSKR) are compositionally biased toward basic residues. 3 positions are modified to phosphoserine: Ser-476, Ser-569, and Ser-570.

Part of the MCD recombinosome complex, at least composed of IHO1, REC114 and MEI4. Interacts with REC114. Interacts with MEI4. Interacts with HORMAD1. Interacts with ANKRD31. Detected in spermatocytes and testis (at protein level).

The protein resides in the chromosome. Its function is as follows. Required for DNA double-strand breaks (DSBs) formation in unsynapsed regions during meiotic recombination. Probably acts by forming a complex with MEI4 and REC114, which activates DSBs formation in unsynapsed regions, an essential step to ensure completion of synapsis. Not required for HORMAD1 functions in pairing-independent synaptonemal complex formation, ATR recruitment to unsynapsed axes, meiotic silencing of unsynapsed chromatin (MSUC) or meiotic surveillance. This Mus musculus (Mouse) protein is Interactor of HORMAD1 protein 1.